A 314-amino-acid chain; its full sequence is ATP synthase gamma chain (314 aa).

Belongs to the ATPase gamma chain family. In terms of assembly, F-type ATPases have 2 components, CF(1) - the catalytic core - and CF(0) - the membrane proton channel. CF(1) has five subunits: alpha(3), beta(3), gamma(1), delta(1), epsilon(1). CF(0) has three main subunits: a, b and c.

The protein localises to the cellular thylakoid membrane. Its function is as follows. Produces ATP from ADP in the presence of a proton gradient across the membrane. The gamma chain is believed to be important in regulating ATPase activity and the flow of protons through the CF(0) complex. This is ATP synthase gamma chain from Crocosphaera subtropica (strain ATCC 51142 / BH68) (Cyanothece sp. (strain ATCC 51142)).